Reading from the N-terminus, the 205-residue chain is Thymidine kinase (205 aa).

ATP is bound by residues 9 to 16 and 87 to 90; these read SAMNAGKS and DESQ. Glu-88 functions as the Proton acceptor in the catalytic mechanism. Zn(2+)-binding residues include Cys-145, Cys-147, Cys-182, and His-185.

It belongs to the thymidine kinase family. Homotetramer.

The protein localises to the cytoplasm. The catalysed reaction is thymidine + ATP = dTMP + ADP + H(+). The sequence is that of Thymidine kinase from Salmonella paratyphi A (strain ATCC 9150 / SARB42).